We begin with the raw amino-acid sequence, 564 residues long: Dihydroxy-acid dehydratase (564 aa).

D78 contributes to the Mg(2+) binding site. C119 contacts [2Fe-2S] cluster. Mg(2+) contacts are provided by D120 and K121. The residue at position 121 (K121) is an N6-carboxylysine. C192 serves as a coordination point for [2Fe-2S] cluster. E451 is a binding site for Mg(2+). The Proton acceptor role is filled by S477.

It belongs to the IlvD/Edd family. As to quaternary structure, homodimer. Requires [2Fe-2S] cluster as cofactor. Mg(2+) is required as a cofactor.

The catalysed reaction is (2R)-2,3-dihydroxy-3-methylbutanoate = 3-methyl-2-oxobutanoate + H2O. It catalyses the reaction (2R,3R)-2,3-dihydroxy-3-methylpentanoate = (S)-3-methyl-2-oxopentanoate + H2O. The protein operates within amino-acid biosynthesis; L-isoleucine biosynthesis; L-isoleucine from 2-oxobutanoate: step 3/4. It participates in amino-acid biosynthesis; L-valine biosynthesis; L-valine from pyruvate: step 3/4. Functionally, functions in the biosynthesis of branched-chain amino acids. Catalyzes the dehydration of (2R,3R)-2,3-dihydroxy-3-methylpentanoate (2,3-dihydroxy-3-methylvalerate) into 2-oxo-3-methylpentanoate (2-oxo-3-methylvalerate) and of (2R)-2,3-dihydroxy-3-methylbutanoate (2,3-dihydroxyisovalerate) into 2-oxo-3-methylbutanoate (2-oxoisovalerate), the penultimate precursor to L-isoleucine and L-valine, respectively. The protein is Dihydroxy-acid dehydratase of Nitratiruptor sp. (strain SB155-2).